Reading from the N-terminus, the 290-residue chain is ATP synthase gamma chain (290 aa).

This sequence belongs to the ATPase gamma chain family. In terms of assembly, F-type ATPases have 2 components, CF(1) - the catalytic core - and CF(0) - the membrane proton channel. CF(1) has five subunits: alpha(3), beta(3), gamma(1), delta(1), epsilon(1). CF(0) has four main subunits: a, b, b' and c.

It is found in the cellular chromatophore membrane. Its function is as follows. Produces ATP from ADP in the presence of a proton gradient across the membrane. The gamma chain is believed to be important in regulating ATPase activity and the flow of protons through the CF(0) complex. In Rhodobacter capsulatus (Rhodopseudomonas capsulata), this protein is ATP synthase gamma chain.